A 248-amino-acid polypeptide reads, in one-letter code: Prepilin leader peptidase/N-methyltransferase (248 aa).

The chain crosses the membrane as a helical span at residues 1–21 (MLSILFIFGLILGSFYYTAGC). Positions 36, 39, 61, and 64 each coordinate Zn(2+). 6 consecutive transmembrane segments (helical) span residues 68–88 (ISFM…AAGI), 90–110 (FGIS…IIVA), 114–134 (IHFM…LAAA), 143–163 (WYAG…IAAI), 178–198 (VIGF…SVLI), and 223–243 (AIAA…SFYI).

It belongs to the peptidase A24 family. The cofactor is Zn(2+).

Its subcellular location is the cell membrane. It catalyses the reaction Typically cleaves a -Gly-|-Phe- bond to release an N-terminal, basic peptide of 5-8 residues from type IV prepilin, and then N-methylates the new N-terminal amino group, the methyl donor being S-adenosyl-L-methionine.. In terms of biological role, plays a role in type II pseudopili formation by proteolytically removing the leader sequence from substrate proteins and subsequently monomethylating the alpha-amino group of the newly exposed N-terminal phenylalanine. Substrates include proteins required for biogenesis of the type II general secretory apparatus. The polypeptide is Prepilin leader peptidase/N-methyltransferase (comC) (Bacillus subtilis (strain 168)).